Consider the following 497-residue polypeptide: UPF0371 protein cu0538 (497 aa).

It belongs to the UPF0371 family.

The chain is UPF0371 protein cu0538 from Corynebacterium urealyticum (strain ATCC 43042 / DSM 7109).